Consider the following 67-residue polypeptide: Conotoxin ArMLCL-012 (67 aa).

The first 19 residues, 1 to 19 (MLCLPVFIILLLLASPAAS), serve as a signal peptide directing secretion. The propeptide occupies 20–45 (NPLEKRIQSDLIRAALEDADTKNDPR). Position 64 is a cysteine amide (cysteine 64).

It belongs to the conotoxin T superfamily. In terms of processing, contains 2 disulfide bonds that can be either 'C1-C3, C2-C4' or 'C1-C4, C2-C3', since these disulfide connectivities have been observed for conotoxins with cysteine framework V (for examples, see AC P0DQQ7 and AC P81755). As to expression, expressed by the venom duct.

The protein localises to the secreted. This is Conotoxin ArMLCL-012 from Conus arenatus (Sand-dusted cone).